Here is a 371-residue protein sequence, read N- to C-terminus: Ferrochelatase (371 aa).

Residues H218 and E299 each coordinate Fe cation.

This sequence belongs to the ferrochelatase family.

Its subcellular location is the cytoplasm. It catalyses the reaction heme b + 2 H(+) = protoporphyrin IX + Fe(2+). Its pathway is porphyrin-containing compound metabolism; protoheme biosynthesis; protoheme from protoporphyrin-IX: step 1/1. In terms of biological role, catalyzes the ferrous insertion into protoporphyrin IX. This chain is Ferrochelatase, found in Cupriavidus necator (strain ATCC 17699 / DSM 428 / KCTC 22496 / NCIMB 10442 / H16 / Stanier 337) (Ralstonia eutropha).